The sequence spans 148 residues: MKEKTPFKNEKEFHEMVKKTKKGTFSGWYIIDKDNNSVEFSGKFNRQFKLNKPVITVNTEYVTRKELNEYKDSNDQRLTKIETTLAAQGEQINKLTQTVEKQGEQIRELQVEQKAQGEQIKAQGETLKLILQTLQKMSDRLDKIDPSK.

This sequence belongs to the UPF0134 family.

In Mycoplasma pneumoniae (strain ATCC 29342 / M129 / Subtype 1) (Mycoplasmoides pneumoniae), this protein is UPF0134 protein MPN_204.